The primary structure comprises 305 residues: Ferrochelatase (305 aa).

Residues His182 and Glu262 each coordinate Fe cation.

This sequence belongs to the ferrochelatase family.

The protein resides in the cytoplasm. It carries out the reaction heme b + 2 H(+) = protoporphyrin IX + Fe(2+). Its pathway is porphyrin-containing compound metabolism; protoheme biosynthesis; protoheme from protoporphyrin-IX: step 1/1. In terms of biological role, catalyzes the ferrous insertion into protoporphyrin IX. This Herpetosiphon aurantiacus (strain ATCC 23779 / DSM 785 / 114-95) protein is Ferrochelatase.